A 199-amino-acid polypeptide reads, in one-letter code: Pre T-cell antigen receptor alpha (199 aa).

A signal peptide spans M1 to A16. The Extracellular portion of the chain corresponds to L17–Q146. Residues C47 and C107 are joined by a disulfide bond. Residues N67 and N117 are each glycosylated (N-linked (GlcNAc...) asparagine). A helical membrane pass occupies residues V147–L167. At T168–T199 the chain is on the cytoplasmic side.

Heterodimer with TCRB; disulfide linked. This heterodimer assembles with CD3 proteins into a signaling-competent pre-T-cell receptor complex. Interacts with RHBDD1. Isoform 1 is expressed at higher levels than isoform 2 in the thymus while only isoform 2 is expressed in polyclonal beta-only cells. Isoform 1 shows a predominant expression in immature thymocytes.

Its subcellular location is the membrane. It is found in the cell membrane. Component of the pre-T-cell receptor complex (composed of PTCRA, TCRB and the CD3 complex) that plays a crucial role in early T-cell development, particularly alpha-beta T cell differentiation. Isoform 1 acts to retain most TCRB intracellularly, while isoform 2 permits higher levels of cell surface TCRB expression and facilitates signaling from the CD3-TCRB complex. This is Pre T-cell antigen receptor alpha from Mus musculus (Mouse).